The sequence spans 169 residues: Macrocypin-1a (169 aa).

It belongs to the protease inhibitor I85 family.

In terms of biological role, inhibits papain and cysteine cathepsin endopeptidases, and also inhibits cathepsins B and H, which exhibit both exopeptidase and endopeptidase activities. The polypeptide is Macrocypin-1a (Macrolepiota procera (Parasol mushroom)).